A 350-amino-acid polypeptide reads, in one-letter code: Zinc finger protein 367 (350 aa).

The interval S104–D151 is disordered. Positions G137–D151 are enriched in basic and acidic residues. 2 consecutive C2H2-type zinc fingers follow at residues I167 to H189 and Y195 to H219. The disordered stretch occupies residues K290–Q327. The stretch at L308 to N342 forms a coiled coil. Position 310 is a phosphoserine (S310). Over residues E316 to Q327 the composition is skewed to basic and acidic residues.

Belongs to the krueppel C2H2-type zinc-finger protein family.

The protein resides in the nucleus. Transcriptional activator. Isoform 1 may be involved in transcriptional activation of erythroid genes. The chain is Zinc finger protein 367 (ZNF367) from Homo sapiens (Human).